The following is a 651-amino-acid chain: Chaperone protein HtpG (651 aa).

The tract at residues 1–353 is a; substrate-binding; sequence MAAHVEQLEF…AQDMSLNVSR (353 aa). A b region spans residues 354-569; it reads EILQQDRQIR…TFGITPALAR (216 aa). Residues 570–651 are c; that stretch reads MYRASGQPVP…RLTRTVGDQT (82 aa).

This sequence belongs to the heat shock protein 90 family. As to quaternary structure, homodimer.

It is found in the cytoplasm. Its function is as follows. Molecular chaperone. Has ATPase activity. This Mycolicibacterium vanbaalenii (strain DSM 7251 / JCM 13017 / BCRC 16820 / KCTC 9966 / NRRL B-24157 / PYR-1) (Mycobacterium vanbaalenii) protein is Chaperone protein HtpG.